The chain runs to 882 residues: Alanine--tRNA ligase (882 aa).

4 residues coordinate Zn(2+): His568, His572, Cys670, and His674.

Belongs to the class-II aminoacyl-tRNA synthetase family. Zn(2+) is required as a cofactor.

Its subcellular location is the cytoplasm. The enzyme catalyses tRNA(Ala) + L-alanine + ATP = L-alanyl-tRNA(Ala) + AMP + diphosphate. Catalyzes the attachment of alanine to tRNA(Ala) in a two-step reaction: alanine is first activated by ATP to form Ala-AMP and then transferred to the acceptor end of tRNA(Ala). Also edits incorrectly charged Ser-tRNA(Ala) and Gly-tRNA(Ala) via its editing domain. The sequence is that of Alanine--tRNA ligase from Syntrophotalea carbinolica (strain DSM 2380 / NBRC 103641 / GraBd1) (Pelobacter carbinolicus).